A 483-amino-acid polypeptide reads, in one-letter code: Acetyltransferase AOL_s00215g273 (483 aa).

The next 8 helical transmembrane spans lie at 9-29 (ALIGVTVIPTLILSLPTTSFV), 33-53 (IYPLPALLVLRALLWPPTEGL), 141-161 (VAYIFESMVSILSIYLGLYTC), 191-211 (IFQMVVAFMGIFAMVSNSVLV), 292-312 (FLVFSAFGVSGLLHSLAVYYG), 334-354 (VTGYFFYIQPFAITLEDFICW), 372-392 (WFVGMVYTLTWFTWGTAVLWI), and 453-473 (LGGYLYLYAYTTLEILGGSGF).

Belongs to the wax synthase family.

Its subcellular location is the membrane. It participates in secondary metabolite biosynthesis; terpenoid biosynthesis. Functionally, acetyltransferase; part of the gene cluster that mediates the biosynthesis of sesquiterpenyl epoxy-cyclohexenoids (SECs) such as anthrobotrisins and arthrosporols, metabolites that possess a novel hybrid carbon skeleton consisting of a polyketide-derived epoxycyclohexenol combined with a terpenoid-derived monocyclic sesquiterpenol substructure (PKS-PTS hybrid). The SEC pathway plays an important role for fungal soil colonization via decreasing fungal nematode-capturing ability. The role of the acetyltransferase in SEC biosynthesis has still to be determined. The pathway begins with the biosynthesis of 6-methylsalicylic acid (6-MSA), the first precursor of the polyketide-derived epoxycyclohexenol in arthrosporols, by the polyketide synthase (PKS) AOL_s00215g283 via condensation of 1 acetate and 3 malonate units. The 6-methylsalicylic acid decarboxylase AOL_s00215g281 then catalyzes the decarboxylation of 6-methylsalicylic acid to yield m-cresol. The cytochrome P450 monooxygenase AOL_s00215g282 further oxidizes m-cresol to yield toluquinol. With the assistance of the oxidoreductase AOL_s00215g277, the polyprenyl transferase AOL_s00215g276 catalyzes the farnesylation of toluquinol to produce farnesyl hydroquinone, the hybrid precursor for biosynthesis of SECs. Farnesyl hydroquinone undergoes epoxidation and then subsequent dehydrogenation to form farnesyl epoxy-quinone, the first and simplest SEC. The cytochrome P450 monooxygenase AOL_s00215g278 and the FAD-dependent monooxygenase AOL_s00215g279 might be involved in the oxygenation of the phenol moiety, most likely in the epoxy formation. The cytochrome P450 monooxygenases AOL_s00215g274 and AOL_s00215g280 are involved in specific regional ketone reductions at respectively C-4 and C-1 of farnesyl epoxy-quinone PubMed:33823587. The chain is Acetyltransferase AOL_s00215g273 from Arthrobotrys oligospora (strain ATCC 24927 / CBS 115.81 / DSM 1491) (Nematode-trapping fungus).